Here is a 90-residue protein sequence, read N- to C-terminus: RNA-binding protein Hfq (90 aa).

Positions 10-70 (DGFLNLLRRE…LSTITPARPL (61 aa)) constitute a Sm domain.

Belongs to the Hfq family. Homohexamer.

Functionally, RNA chaperone that binds small regulatory RNA (sRNAs) and mRNAs to facilitate mRNA translational regulation in response to envelope stress, environmental stress and changes in metabolite concentrations. Also binds with high specificity to tRNAs. The sequence is that of RNA-binding protein Hfq from Symbiobacterium thermophilum (strain DSM 24528 / JCM 14929 / IAM 14863 / T).